Here is a 484-residue protein sequence, read N- to C-terminus: Probable sphingolipid transporter spinster homolog 2 (484 aa).

The tract at residues 1-23 (MDVDGEGDRGQNPRIMERDSDSI) is disordered. The chain crosses the membrane as a helical span at residues 38 to 58 (LLFVFCVVNLINYIDRGAIAS). Asparagine 62 and asparagine 85 each carry an N-linked (GlcNAc...) asparagine glycan. Helical transmembrane passes span 93 to 113 (VLSS…ASLA), 122 to 142 (IGVG…SFDF), 147 to 167 (ICRM…APFI), 181 to 201 (AVFY…GGVV), 209 to 229 (AAFW…FVIK), 273 to 293 (VYVT…AYSY), 311 to 331 (IFGG…GVIL), 345 to 362 (LSVS…AFCF), 377 to 397 (LLVF…VKPS), 405 to 425 (MSTV…VGVL), and 436 to 456 (SLVL…GIFL). Serine 466 is modified (phosphoserine).

The protein belongs to the major facilitator superfamily. Spinster (TC 2.A.1.49) family.

The protein localises to the late endosome membrane. It is found in the lysosome membrane. Functionally, probable sphingolipid transporter that plays a central role in endosomes and/or lysosomes storage. This chain is Probable sphingolipid transporter spinster homolog 2, found in Arabidopsis thaliana (Mouse-ear cress).